The primary structure comprises 296 residues: Acetylglutamate kinase (296 aa).

Substrate is bound by residues 65-66 (GG), Arg-87, and Asn-190.

The protein belongs to the acetylglutamate kinase family. ArgB subfamily.

Its subcellular location is the cytoplasm. It carries out the reaction N-acetyl-L-glutamate + ATP = N-acetyl-L-glutamyl 5-phosphate + ADP. It participates in amino-acid biosynthesis; L-arginine biosynthesis; N(2)-acetyl-L-ornithine from L-glutamate: step 2/4. Functionally, catalyzes the ATP-dependent phosphorylation of N-acetyl-L-glutamate. The protein is Acetylglutamate kinase of Moorella thermoacetica (strain ATCC 39073 / JCM 9320).